A 185-amino-acid chain; its full sequence is MEIEKNKEKIKLQFDIIKRTDGYISTTNNKAALLLAVNGATATILSNKVGYFAGLFHENCLYMVIFFLLLFMISIFIFMSVLLSLKSIIPNMRGVKEKWDSTDSNVSFVYISSNNDGKNYYKKYLMESEDGLLLDMCEQSFILSCIAKQKFLFFSSAVSWIKRAYACIIVLVIFKFVDYVNGALL.

3 helical membrane passes run A32–F52, M63–L83, and F141–I161.

Its subcellular location is the cell inner membrane. Functionally, pycsar (pyrimidine cyclase system for antiphage resistance) provides immunity against bacteriophage. The pyrimidine cyclase (PycC) synthesizes cyclic nucleotides in response to infection; these serve as specific second messenger signals. The signals activate the adjacent effector, leading to bacterial cell death and abortive phage infection. A clade E Pycsar system. Its function is as follows. The effector component of a two-gene Pycsar system. Expression of this and adjacent cytidylate cyclase EcPycC (AC P0DV24) confers resistance to bacteriophage P1 and T5; this protein is required for resistance. When cells expressing the Pycsar system are infected by phage T5 at low multiplicity of infection (0.2 MOI) the culture survives, at 2.0 MOI bacteria enter growth arrest. The same cells enter growth arrest after exposure to 250 uM cCMP but not cUMP; this effector protein responds only to cCMP, usually produced by its cognate NTP cyclase. Some of the cells treated with cCMP have abnormal membrane protrusions, probably due to effects on membrane integrity. This Escherichia coli protein is Pycsar effector protein EcPycTM.